A 775-amino-acid polypeptide reads, in one-letter code: Rab3 GTPase-activating protein catalytic subunit (775 aa).

Phosphoserine is present on residues S173, S330, S373, S375, and S384. Positions 324 to 351 (DEGKKTSPSDSMTKAYPADAGKAGGQLG) are disordered. Residues 386–414 (AEDLRGNGQESTKKGGPKDMAPLKPEGRL) are disordered. The residue at position 458 (S458) is a Phosphoserine.

It belongs to the Rab3-GAP catalytic subunit family. In terms of assembly, the Rab3 GTPase-activating complex is a heterodimer composed of Rab3gap1 and Rab3gap2. The Rab3 GTPase-activating complex interacts with DMXL2. Interacts with LMAN1.

It localises to the cytoplasm. The protein localises to the endoplasmic reticulum. The protein resides in the golgi apparatus. It is found in the cis-Golgi network. Catalytic subunit of the Rab3 GTPase-activating (Rab3GAP) complex composed of RAB3GAP1 and RAB3GAP2, which has GTPase-activating protein (GAP) activity towards various Rab3 subfamily members (RAB3A, RAB3B, RAB3C and RAB3D), RAB5A and RAB43, and guanine nucleotide exchange factor (GEF) activity towards RAB18. As part of the Rab3GAP complex, acts as a GAP for Rab3 proteins by converting active RAB3-GTP to the inactive form RAB3-GDP. Rab3 proteins are involved in regulated exocytosis of neurotransmitters and hormones. The Rab3GAP complex, acts as a GEF for RAB18 by promoting the conversion of inactive RAB18-GDP to the active form RAB18-GTP. Recruits and stabilizes RAB18 at the cis-Golgi membrane where RAB18 is most likely activated. Also involved in RAB18 recruitment at the endoplasmic reticulum (ER) membrane where it maintains proper ER structure. Required for normal eye and brain development. May participate in neurodevelopmental processes such as proliferation, migration and differentiation before synapse formation, and non-synaptic vesicular release of neurotransmitters. The protein is Rab3 GTPase-activating protein catalytic subunit of Rattus norvegicus (Rat).